We begin with the raw amino-acid sequence, 545 residues long: Periplasmic trehalase (545 aa).

An N-terminal signal peptide occupies residues 1–30 (MPDRTALPRAMLAAWVLLLLAACSQGPAPT). Substrate contacts are provided by residues Arg160, 167 to 168 (WD), Asn204, 213 to 215 (RSQ), 285 to 287 (RQE), and Gly318. Active-site proton donor/acceptor residues include Asp320 and Glu503. Glu518 lines the substrate pocket.

The protein belongs to the glycosyl hydrolase 37 family.

Its subcellular location is the periplasm. The enzyme catalyses alpha,alpha-trehalose + H2O = alpha-D-glucose + beta-D-glucose. In terms of biological role, provides the cells with the ability to utilize trehalose at high osmolarity by splitting it into glucose molecules that can subsequently be taken up by the phosphotransferase-mediated uptake system. This Pseudomonas aeruginosa (strain ATCC 15692 / DSM 22644 / CIP 104116 / JCM 14847 / LMG 12228 / 1C / PRS 101 / PAO1) protein is Periplasmic trehalase.